The sequence spans 277 residues: Glutamate racemase (277 aa).

Substrate is bound by residues 16–17 (DS) and 48–49 (YG). Cysteine 79 acts as the Proton donor/acceptor in catalysis. 80–81 (NT) serves as a coordination point for substrate. Cysteine 191 functions as the Proton donor/acceptor in the catalytic mechanism. 192-193 (TH) is a binding site for substrate.

Belongs to the aspartate/glutamate racemases family.

It carries out the reaction L-glutamate = D-glutamate. Its pathway is cell wall biogenesis; peptidoglycan biosynthesis. In terms of biological role, provides the (R)-glutamate required for cell wall biosynthesis. This chain is Glutamate racemase, found in Symbiobacterium thermophilum (strain DSM 24528 / JCM 14929 / IAM 14863 / T).